The sequence spans 200 residues: Charged multivesicular body protein 6-A (200 aa).

The N-myristoyl glycine moiety is linked to residue glycine 2. Positions 9–102 form a coiled coil; it reads RRSRVTEQDK…FAQIEMKVIE (94 aa). Residues 166-200 are disordered; the sequence is EDLELPEAPSEPLPDTIPEKQAVKNKPKPQMIAAS. The Type-2 MIT-interacting motif motif lies at 168 to 179; it reads LELPEAPSEPLP.

This sequence belongs to the SNF7 family. In terms of assembly, probable core component of the endosomal sorting required for transport complex III (ESCRT-III). ESCRT-III components are thought to multimerize to form a flat lattice on the perimeter membrane of the endosome.

It is found in the endomembrane system. Its subcellular location is the late endosome membrane. Functionally, probable core component of the endosomal sorting required for transport complex III (ESCRT-III) which is involved in multivesicular bodies (MVBs) formation and sorting of endosomal cargo proteins into MVBs. MVBs contain intraluminal vesicles (ILVs) that are generated by invagination and scission from the limiting membrane of the endosome and mostly are delivered to lysosomes enabling degradation of membrane proteins, such as stimulated growth factor receptors, lysosomal enzymes and lipids. In the ESCRT-III complex, it probably serves as an acceptor for the ESCRT-II complex on endosomal membranes. The polypeptide is Charged multivesicular body protein 6-A (chmp6-a) (Xenopus laevis (African clawed frog)).